A 76-amino-acid chain; its full sequence is Exodeoxyribonuclease 7 small subunit (76 aa).

It belongs to the XseB family. As to quaternary structure, heterooligomer composed of large and small subunits.

It localises to the cytoplasm. The enzyme catalyses Exonucleolytic cleavage in either 5'- to 3'- or 3'- to 5'-direction to yield nucleoside 5'-phosphates.. In terms of biological role, bidirectionally degrades single-stranded DNA into large acid-insoluble oligonucleotides, which are then degraded further into small acid-soluble oligonucleotides. In Staphylococcus aureus (strain MRSA252), this protein is Exodeoxyribonuclease 7 small subunit.